Reading from the N-terminus, the 513-residue chain is HTH-type transcriptional regulatory protein TyrR (513 aa).

In terms of domain architecture, ACT spans Arg2–Trp72. One can recognise a PAS domain in the interval Glu78–Gly114. The 223-residue stretch at Ile206–Thr428 folds into the Sigma-54 factor interaction domain. Residues Gly234–Asp241 and Ala290–Glu299 each bind ATP. Positions Ser482–Arg502 form a DNA-binding region, H-T-H motif.

Homodimer. In presence of tyrosine (or high concentrations of phenylalanine or tryptophan) and ATP, it self-associates to form an hexamer. At low tyrosine concentrations, homodimers can bind to certain recognition sequences referred to as 'strong TyrR boxes'. Homohexamers are the active repressing species, interacting with two or three tyrR boxes in the targeted regulatory DNA, including 'strong TyrR boxes' and lower-affinity sites called 'weak TyrR boxes'.

The protein localises to the cytoplasm. With respect to regulation, binding of ATP strongly enhances the affinity of TyrR for tyrosine. Its function is as follows. Dual transcriptional regulator of the TyrR regulon, which includes a number of genes coding for proteins involved in the biosynthesis or transport of the three aromatic amino acids, phenylalanine, tyrosine and tryptophan. These three aromatic amino acids act as effectors which bind to the TyrR protein to form an active regulatory protein. Modulates the expression of at least eight unlinked transcription units, including aroF, aroG, aroLM, aroP, mtr, tyrA, tyrB and tyrP. In most cases TyrR acts as a repressor, but positive effects have been observed on the tyrP gene, which is repressed in the presence of tyrosine and activated at high phenylalanine concentrations. Is also involved in activation, but not repression, of mtr expression in association with phenylalanine or tyrosine. Acts by binding specifically to TyrR boxes in the promoter region of the target genes. The sequence is that of HTH-type transcriptional regulatory protein TyrR from Escherichia coli (strain K12).